The chain runs to 445 residues: 3-phosphoshikimate 1-carboxyvinyltransferase (445 aa).

3-phosphoshikimate-binding residues include lysine 28, serine 29, and arginine 33. Phosphoenolpyruvate is bound at residue lysine 28. Phosphoenolpyruvate-binding residues include glycine 101 and arginine 129. The 3-phosphoshikimate site is built by serine 175, glutamine 177, aspartate 328, and lysine 355. A phosphoenolpyruvate-binding site is contributed by glutamine 177. The Proton acceptor role is filled by aspartate 328. 2 residues coordinate phosphoenolpyruvate: arginine 359 and arginine 402.

Belongs to the EPSP synthase family. Monomer.

The protein resides in the cytoplasm. It carries out the reaction 3-phosphoshikimate + phosphoenolpyruvate = 5-O-(1-carboxyvinyl)-3-phosphoshikimate + phosphate. It participates in metabolic intermediate biosynthesis; chorismate biosynthesis; chorismate from D-erythrose 4-phosphate and phosphoenolpyruvate: step 6/7. In terms of biological role, catalyzes the transfer of the enolpyruvyl moiety of phosphoenolpyruvate (PEP) to the 5-hydroxyl of shikimate-3-phosphate (S3P) to produce enolpyruvyl shikimate-3-phosphate and inorganic phosphate. The polypeptide is 3-phosphoshikimate 1-carboxyvinyltransferase (Rhodopseudomonas palustris (strain HaA2)).